We begin with the raw amino-acid sequence, 787 residues long: MLPVRNYGETIEEYEVQHLLGKGGFASVYKARCRRTYQDVAIKMIDKKLIHGTGLSSRVRQEVEIHSRLKHPSVLQLYTFFQDANYVYLVLELAHNGELHRYMNQQMSHPFTEADAATILQQVVAGLLYLHSHNIMHRDISLSNLLLSKDMHVKIADFGLATQLKRPDEKHMTMCGTPNFISPEVVSRLSHGLAADVWSVGCLLYTLVVGRPPFDTDAVQSTLNKVVMSEFIMPTHLSFEACDLIEKLLKKNPHERISLEQVLRHPFMSKRSAGAEEPQYNSSKPGACDFYMEAQGQSVASGDSGIVTFASNESRSSQRLRSIEKSAQSSSNPQMLPQIQEEYGYWQPSTEHKPYPMPLSSDNAEWERLGSKGNQPHTAASVITEEQQMRVPPLNTIRLQPTRYKTKNAIMSILRHGEVVLEFVKFRSKLNEDRVTDICRISGDGRRIIIYQPDPGRGLPIREQPPPPESHIAGDKSVYNYDSLPSKHWKKYLYAARFVGLVKSKTPKITYFSSLAKCHLMENMIDFEMSYYSGAKYVKTSPGEELKLYNNYGMLLSDLACPEAKKMIEHGNECFSHCINICNALELAQQSADSRNTCFPVTIGRRPLTDVSHSQRFDGLRDTTNIAYSTPKSHQGSINFSMSTISSVQNGSESVSSTHSHASRAQIQASQQNVPIKRINIPDVGIATELSHGIVQVQFYDGSMISLIPEIQGGGLTYTQCNGVSTYFPKYDGDLPLAVRDRLAQIPQVKLRLKCAPLLSNHRKADNIAMTPKSTTPSTPCYNRIVL.

Residues 14-268 enclose the Protein kinase domain; it reads YEVQHLLGKG…LEQVLRHPFM (255 aa). ATP-binding positions include 20–28 and Lys43; that span reads LGKGGFASV. Asp139 serves as the catalytic Proton acceptor. The segment at 311-336 is disordered; the sequence is SNESRSSQRLRSIEKSAQSSSNPQML. A Cryptic POLO box 1 (CPB1) domain is found at 386-505; sequence EQQMRVPPLN…ARFVGLVKSK (120 aa). The region spanning 506-613 is the Cryptic POLO box 2 (CPB2) domain; the sequence is TPKITYFSSL…GRRPLTDVSH (108 aa). A POLO box domain is found at 675–755; it reads PIKRINIPDV…IPQVKLRLKC (81 aa).

The protein belongs to the protein kinase superfamily. Ser/Thr protein kinase family. CDC5/Polo subfamily. In terms of assembly, homodimer. In terms of processing, ubiquitinated by the SCF(Slimb) ubiquitin ligase complex; leading to its degradation by the proteasome during interphase and regulating centriole number and ensuring the block to centriole reduplication.

The protein resides in the cytoplasm. The protein localises to the cytoskeleton. It localises to the microtubule organizing center. It is found in the centrosome. Its subcellular location is the centriole. The enzyme catalyses L-seryl-[protein] + ATP = O-phospho-L-seryl-[protein] + ADP + H(+). It catalyses the reaction L-threonyl-[protein] + ATP = O-phospho-L-threonyl-[protein] + ADP + H(+). Its function is as follows. Serine/threonine-protein kinase that plays a central role in centriole duplication. Able to trigger procentriole formation on the surface of the mother centriole cylinder, using mother centriole as a platform, leading to the recruitment of centriole biogenesis proteins such as sas-6. When overexpressed, it is able to induce centrosome amplification through the simultaneous generation of multiple procentrioles adjoining each parental centriole during S phase. Centrosome amplification following overexpression can initiate tumorigenesis, highlighting the importance of centrosome regulation in cancers. The chain is Serine/threonine-protein kinase PLK4 (SAK) from Drosophila willistoni (Fruit fly).